An 878-amino-acid polypeptide reads, in one-letter code: Leucine--tRNA ligase (878 aa).

The 'HIGH' region signature appears at 56–66 (PYPSGKLHMGH). The 'KMSKS' region motif lies at 630–634 (KMSKS). Lys633 provides a ligand contact to ATP.

It belongs to the class-I aminoacyl-tRNA synthetase family.

It is found in the cytoplasm. It carries out the reaction tRNA(Leu) + L-leucine + ATP = L-leucyl-tRNA(Leu) + AMP + diphosphate. This is Leucine--tRNA ligase from Prochlorococcus marinus (strain MIT 9303).